Reading from the N-terminus, the 103-residue chain is Cycloviolacin-O9 (103 aa).

The signal sequence occupies residues 1 to 9; that stretch reads AAFALPAFA. A propeptide spanning residues 10–69 is cleaved from the precursor; it reads SFEKDVITPAALEAVLNRKAPLYNIMMENDAILNVIANVKTVISNPVLEEALLKTNHGVN. A cross-link (cyclopeptide (Gly-Asn)) is located at residues 70 to 99; that stretch reads GIPCGESCVWIPCLTSAVGCSCKSKVCYRN. 3 disulfide bridges follow: C73–C89, C77–C91, and C82–C96. Residues 100-103 constitute a propeptide that is removed on maturation; that stretch reads SLDN.

In terms of processing, this is a cyclic peptide.

In terms of biological role, probably participates in a plant defense mechanism. This chain is Cycloviolacin-O9, found in Viola biflora (Yellow wood violet).